A 142-amino-acid chain; its full sequence is Large ribosomal subunit protein uL11 (142 aa).

This sequence belongs to the universal ribosomal protein uL11 family. In terms of assembly, part of the ribosomal stalk of the 50S ribosomal subunit. Interacts with L10 and the large rRNA to form the base of the stalk. L10 forms an elongated spine to which L12 dimers bind in a sequential fashion forming a multimeric L10(L12)X complex. In terms of processing, one or more lysine residues are methylated.

Functionally, forms part of the ribosomal stalk which helps the ribosome interact with GTP-bound translation factors. This is Large ribosomal subunit protein uL11 from Xylella fastidiosa (strain 9a5c).